Reading from the N-terminus, the 5495-residue chain is Microtubule-associated protein futsch (5495 aa).

Disordered stretches follow at residues 1–97 (MGDQ…DADG), 656–975 (AKAD…LKEE), 988–1074 (RDEM…AEEE), 1086–1111 (ERKARLEGASARQDESELDVEPEQSK), 1128–1167 (KSRTEEQLAKPAEEELSSPTPEEKLSKKTSDTKDDQIGAP), 1185–1204 (SATIESGATTAPTLPEDERI), 1255–1275 (KDAPKDANAEALGELPDSGER), 1306–1358 (HEEA…EPNK), 1402–1840 (NQED…VVES), 1866–2631 (EIGK…PGFV), 2709–2810 (AKTV…KDFA), 2830–4166 (LPTL…DLSL), 4196–4230 (KAESSPRPAVLSKPAEFSQPDTGHTASTPVDEASP), 4362–4612 (IIPD…ASQL), 4636–4668 (AQKSNKEIKDARETKVTSQFTTTTSSATKDDSL), 4687–4975 (AFST…QMLA), 5035–5065 (KTVTTTDSSEPDSEKVVVTTTRTTSESERDQ), 5101–5138 (SYELQHSSSGVSKRSDLDADGDESQDDIPPQYGSEEHS), 5170–5199 (PSTEPIPIQGAPSGDSQSSESVESSSQTWA), and 5328–5350 (GLPSPAPLPVEGGADIRTTPKKE). Residues 35-48 (AKGAGDGPAQDAAQ) show a composition bias toward low complexity. Basic and acidic residues-rich tracts occupy residues 656 to 672 (AKADSMDTDAEPEHEAD), 696 to 716 (EPEHEPEAEQDKDVGEEKKVE), and 758 to 795 (GKADKPRAEVKPVVRSRIDTKPPKSMDRKLAKRDEKKS). Low complexity-rich tracts occupy residues 797–806 (PTTTPAARAP) and 819–831 (PATKSSPSSTPAK). The span at 832–843 (SAKEANNRKVLE) shows a compositional bias: basic and acidic residues. Low complexity predominate over residues 850-888 (RVQATSTVSRRVTSTASERRVQQQAEAKTAATGATQATQ). The segment covering 918-931 (KAADLKKTRLDKGG) has biased composition (basic and acidic residues). The segment covering 932-942 (TTDSSLVSTPS) has biased composition (polar residues). 2 stretches are compositionally biased toward basic and acidic residues: residues 962-975 (DAEKQRELDDLKEE) and 988-1007 (RDEMKRQQHQQIKAELREMP). Residues 1012-1041 (GDGENEPDEEEEYLIIEKEEVEQYTEDSIV) show a composition bias toward acidic residues. Over residues 1047 to 1065 (MTKEEEIQKHQRDSQESEK) the composition is skewed to basic and acidic residues. Basic and acidic residues-rich tracts occupy residues 1128 to 1140 (KSRTEEQLAKPAE) and 1148 to 1163 (PEEKLSKKTSDTKDDQ). Positions 1187–1196 (TIESGATTAP) are enriched in polar residues. 4 stretches are compositionally biased toward basic and acidic residues: residues 1306 to 1319 (HEEADLGLYEKDSQ), 1327 to 1337 (SHKEESAKEEK), 1343 to 1358 (KENKVGEIELGDEPNK), and 1408 to 1443 (EQVKDKEEHEQKIESGIITEKEAKKSASTPEEKETS). 2 tandem repeats follow at residues 1469-1502 (REDTGSIESPPTIEEAIEVEVQAKQEAQKPVPAP) and 1513-1539 (LASKETSRPESATGSVKEDTEQTKSKK). Residues 1469–4032 (REDTGSIESP…SPLASKESSR (2564 aa)) are 53 X approximate repeat. Composition is skewed to basic and acidic residues over residues 1546 to 1555 (PESEAKDKKS), 1571 to 1663 (SVKD…DEKS), 1679 to 1696 (SVKDETEKSKEPSRRESI), 1718 to 1732 (GIKDESAKPESRRDS), and 1748 to 1779 (SVKDEPIKSTEKSRRESVAESFKADSTKDEKS). 17 consecutive repeat copies span residues 1622-1649 (KSALASKEASRPESVTDKSKEPSRRESI), 1660-1686 (DEKSAPPSKEASRPGSVVESVKDETEK), 1690-1718 (PSRRESIAESAKPPIEFREVSRPESVIDG), 1755-1782 (KSTEKSRRESVAESFKADSTKDEKSPLT), 1790-1818 (ESAVENVMDAVGSAERSQPESVTASRDVS), 1837-1865 (VVESVIPASDVVEIEKGAADKEKGVFVSL), 1874-1902 (SEVISRPGPVVESVKPESRRESSTEIVLP), 1911-1939 (PSRPESKVECLKDESEVLKGSTRRESVAE), 1948-1976 (KETSRPESAVGSMKDESMSKEPSRRESVK), 1985-2013 (TSRPASVAESAKDGADDLKELSRPESTTQ), 2022-2050 (DEKSPLASEEASRPASVAESVKDEAEKSK), 2059-2087 (AEKSPLPSKEASRPASVAESIKDEAEKSK), 2096-2124 (AEKSPLPSKEASRPASVAESIKDEAEKSK), 2133-2161 (AEKSPLPSKEASRPASVAESIKDEAEKSK), 2170-2198 (AEKSPLPSKEASRPASVAESIKDEAEKSK), 2215-2243 (KEASRPASVAESIKDEAEKSKEESRRESV), and 2262-2292 (ESIKDEAEKSKEESRRESVAEKSPLPSKEAS). Positions 1804–1815 (ERSQPESVTASR) are enriched in polar residues. Basic and acidic residues-rich tracts occupy residues 1887–1896 (VKPESRRESS), 1904–1942 (HAEDSKEPSRPESKVECLKDESEVLKGSTRRESVAESDK), 1960–1976 (MKDESMSKEPSRRESVK), 1994–2007 (SAKDGADDLKELSR), 2041–2059 (SVKDEAEKSKEESRRESVA), 2078–2096 (SIKDEAEKSKEESRRESVA), 2115–2133 (SIKDEAEKSKEESRRESVA), 2152–2170 (SIKDEAEKSKEESRRESVA), 2189–2207 (SIKDEAEKSKEESRRESVA), 2226–2244 (SIKDEAEKSKEESRRESVA), 2263–2281 (SIKDEAEKSKEESRRESVA), 2300–2318 (SIKDEAEKSKEETRRESVA), 2337–2355 (SIKDEAEKSKEESRRESAA), 2374–2391 (SVKDEADKSKEESRRESM), 2419–2435 (SVKDDPVKSKEPSRRES), 2466–2482 (SVKDEAEKQESRRESKT), 2560–2588 (IKYDLDKPQIIKDDKSTEHSRRESLEDKS), and 2604–2627 (SDHEAAVAIEDDAKSSISPKDKSR). Repeat unit 20 spans residues 2355–2391 (AEKSPLPSKEASRPASVAESVKDEADKSKEESRRESM). 2 repeat units span residues 2703–2726 (LAQIGAAKTVSSPLDEALRTPSAP) and 2761–2787 (WVAESKDDAAQLKSSVEDLRSPVASTE). The span at 2764-2780 (ESKDDAAQLKSSVEDLR) shows a compositional bias: basic and acidic residues. Serine 2800 is modified (phosphoserine; by GSK3-beta). A run of 3 repeats spans residues 2820–2846 (LPLTIELKGNLPTLSSPVDVAHGDFPQ), 2864–2892 (LSKVDIEKTASSPIDEAPKSLIGCPAEER), and 2907–2933 (VEKSKDASRPPSVVESTKADSTKGDIS). Low complexity predominate over residues 2845-2861 (PQTSTPTSSPTVASVQP). Composition is skewed to basic and acidic residues over residues 2889–2914 (AEERPESPAESAKDAAESVEKSKDAS) and 2942–2954 (GPKDDVEKSKESS). Residues 2955-2966 (RPPSVSASITGD) are compositionally biased toward polar residues. 28 consecutive repeat copies span residues 2956-2987 (PPSVSASITGDSTKDVSRPASVVESVKDEHDK), 3006-3034 (GKSDSKSSSQDSQKDEKSTLASKEASRRE), 3049-3075 (SRPESVIASGEPVPRESKSPLDSKDTS), 3089-3117 (EKSEQQSRRESVAESVKADTKKDGKSQEA), 3131-3158 (DEKQESRRQSITGSHKAMSTMGDESPMD), 3200-3224 (KSDITKGEKSPLPSKEVSRPESVVG), 3228-3256 (DEKAESRRESVAESVKPESSKDATSAPPS), 3265-3293 (VLGSLKDEGDKTTSRRVSVADSIKDEKSL), 3302-3330 (PESEAESLKDAAAPSQETSRPESVTESVK), 3339-3367 (KEASRPASVAENAKDSADESKEQRPESLP), 3376-3404 (DEKSPLASKDEAEKSKEESRRESVAEQFP), 3413-3441 (PASVAESVKDEAEKSKEESPLMSKEASRP), 3450-3478 (DEAEKSKEESRRESVAEKSPLPSKEASRP), 3487-3515 (DEADKSKEESRRESGAEKSPLASKEASRP), 3524-3552 (DEAEKSKEESRRESVAEKSPLPSKEASRP), 3561-3589 (DEAEKSKEESRRDSVAEKSPLASKEASRP), 3598-3626 (DEAEKSKEESRRESVAEKSPLASKEASRP), 3635-3663 (DEAEKSKEESRRESVAEKSPLASKEASRP), 3672-3700 (DEAEKSKEESSRDSVAEKSPLASKEASRP), 3709-3737 (DEAEKSKEESRRESVAEKSPLASKEASRP), 3746-3774 (DDAEKSKEESRRESVAEKSPLASKEASRP), 3783-3811 (DEAEKSKEESRRESVAEKSPLPSKEASRP), 3820-3848 (DEAEKSKEESRRESVAEKSSLASKKASRP), 3867-3894 (RRESVAEKSPLASKEASRPASVAESVKD), 3895-3921 (EAEKSKEESRRESVAEKSPLPSKEASR), 3931-3958 (DEADKSKEESRRESGAEKSPLASMEASR), 3968-3995 (DETEKSKEESRRESVTEKSPLPSKEASR), and 4005-4032 (DEAEKSKEESRRESVAEKSPLASKESSR). 7 stretches are compositionally biased toward basic and acidic residues: residues 2980–2996 (SVKDEHDKAESRRESIA), 3017–3051 (SQKDEKSTLASKEASRRESVVESSKDDAEKSESRP), 3061–3075 (VPRESKSPLDSKDTS), 3087–3116 (EDEKSEQQSRRESVAESVKADTKKDGKSQE), 3156–3168 (PMDKADKSKEPSR), 3175–3208 (SIKHENTKDEESPLGSRRDSVAESIKSDITKGEK), and 3226–3248 (IKDEKAESRRESVAESVKPESSK). Serine 3067, serine 3071, and serine 3075 each carry phosphoserine. Positions 3300-3310 (SRPESEAESLK) are enriched in basic and acidic residues. Polar residues predominate over residues 3316–3327 (SQETSRPESVTE). 14 stretches are compositionally biased toward basic and acidic residues: residues 3350-3363 (NAKDSADESKEQRP), 3373-3399 (SIKDEKSPLASKDEAEKSKEESRRESV), 3419-3431 (SVKDEAEKSKEES), 3448-3465 (VKDEAEKSKEESRRESVA), 3484-3502 (SVKDEADKSKEESRRESGA), 3521-3539 (SIKDEAEKSKEESRRESVA), 3558-3576 (SVKDEAEKSKEESRRDSVA), 3599-3613 (EAEKSKEESRRESVA), 3632-3650 (SIKDEAEKSKEESRRESVA), 3669-3687 (SVKDEAEKSKEESSRDSVA), 3710-3724 (EAEKSKEESRRESVA), 3743-3761 (SVKDDAEKSKEESRRESVA), 3780-3798 (SVKDEAEKSKEESRRESVA), and 3817-3835 (SVKDEAEKSKEESRRESVA). Over residues 3836–3850 (EKSSLASKKASRPAS) the composition is skewed to low complexity. Composition is skewed to basic and acidic residues over residues 3854–3872 (SVKDEAEKSKEESRRESVA), 3891–3909 (SVKDEAEKSKEESRRESVA), 3928–3946 (SVKDEADKSKEESRRESGA), 3965–3983 (SVKDETEKSKEESRRESVT), 4002–4020 (SVKDEAEKSKEESRRESVA), 4039–4066 (SIKDEAEGTKQESRRESMPESGKAESIK), 4086–4095 (SVKDETEKPE), and 4115–4141 (AKDEKSPLHSRPESVADKSPDASKEAS). 2 stretches are compositionally biased toward polar residues: residues 4142 to 4152 (RSLSVAETASS) and 4214 to 4223 (QPDTGHTAST). 3 stretches are compositionally biased toward basic and acidic residues: residues 4362–4379 (IIPDFDERQLEEKLKSTA), 4386–4410 (DKSTRDEKSLEISVKVEIESEKSSP), and 4419–4432 (IEEKDKIEQSEKAQ). The segment covering 4443 to 4461 (PESVASQPESVPSPSQSAA) has biased composition (low complexity). A compositionally biased stretch (basic and acidic residues) spans 4462-4481 (SHEHKEVELSESHKAEKSSR). The span at 4498-4508 (RPASSTSQFST) shows a compositional bias: polar residues. Low complexity predominate over residues 4517 to 4528 (ESLLHSLTTTET). The segment covering 4529-4539 (VETKQMEEKSS) has biased composition (basic and acidic residues). Low complexity predominate over residues 4540-4560 (FESVSTSVTKSTVLSSQSTVQ). Composition is skewed to basic and acidic residues over residues 4575–4584 (KVEDSSRRES) and 4639–4650 (SNKEIKDARETK). Composition is skewed to low complexity over residues 4651-4662 (VTSQFTTTTSSA) and 4703-4714 (TTASAVSSTSAS). Acidic residues predominate over residues 4744–4754 (PEDEEPADDVD). Basic and acidic residues-rich tracts occupy residues 4755 to 4764 (ERSSVKESRS) and 4788 to 4798 (LVEEEHEHVEE). The segment covering 4804–4829 (TSTSKTTTLLQSSEQSSTTTSSTSKT) has biased composition (low complexity). The span at 4835–4851 (ESITLTQMDQQTSQSQG) shows a compositional bias: polar residues. Low complexity predominate over residues 4875–4905 (GSAGSVIGAGAGAVAAGGKCESSAASIVSSS). Polar residues predominate over residues 4915-4930 (GKSSPGALTSESQSIP). At serine 4950 the chain carries Phosphoserine; by GSK3-beta. Residues 4955–4970 (VSKDELKSLEMQHHSQ) show a composition bias toward basic and acidic residues. Over residues 5101–5112 (SYELQHSSSGVS) the composition is skewed to polar residues. Positions 5185 to 5196 (SQSSESVESSSQ) are enriched in low complexity.

Heterodimer of a heavy and a light chain. Interacts with Fmr1. Found in a complex with tubulin and Futsch. Post-translationally, several minor light chains can be created with markedly different pIs. Phosphorylated by SGG/GSK3. Phosphorylated by LRRK2 at the presynapse of neuromuscular junctions, which negatively regulates the activity controlling synaptic differentiation. As to expression, neuronal cells within the PNS and CNS.

The protein localises to the cytoplasm. It is found in the cytoskeleton. Functionally, during embryogenesis, necessary for dendritic and axonal organization and growth at the neuromuscular junction through the regulation of the synaptic microtubule cytoskeleton. Microtubule hairpin loops are found within a small subset of synaptic boutons at the neuromuscular synapse, these loops are stabilized by futsch. Loop morphology and dynamics suggest that rearrangement of these microtubule-based loops is a critical component of the process of bouton division and for subsequent nerve-terminal growth and branching. Translation is repressed by Fmr1. Together with ringer, required for neuromuscular junction (NMJ) bouton growth by regulating synaptic microtubules. Function with ringer in maintaining microtubule stability and dynamics, is essential for promoting axon regeneration in response to peripheral (PNS) and central nervous system (CNS) injury. In response to axotomy, acts downstream of a stress response cascade involving Xbp1 splicing, to control axon regeneration. The polypeptide is Microtubule-associated protein futsch (futsch) (Drosophila melanogaster (Fruit fly)).